The primary structure comprises 339 residues: Methylthioribose-1-phosphate isomerase (339 aa).

Substrate contacts are provided by residues 52 to 54 (RGA), Arg-89, and Gln-188. The active-site Proton donor is Asp-229. 239–240 (NK) contacts substrate.

This sequence belongs to the eIF-2B alpha/beta/delta subunits family. MtnA subfamily.

The catalysed reaction is 5-(methylsulfanyl)-alpha-D-ribose 1-phosphate = 5-(methylsulfanyl)-D-ribulose 1-phosphate. Its pathway is amino-acid biosynthesis; L-methionine biosynthesis via salvage pathway; L-methionine from S-methyl-5-thio-alpha-D-ribose 1-phosphate: step 1/6. Catalyzes the interconversion of methylthioribose-1-phosphate (MTR-1-P) into methylthioribulose-1-phosphate (MTRu-1-P). In Anaeromyxobacter dehalogenans (strain 2CP-C), this protein is Methylthioribose-1-phosphate isomerase.